The sequence spans 687 residues: MGQEDQELLIRGGSKHPSAEHLNNGDSGAASQSCINQGFGQAKNYGTLLPPSPPEDSGSGSGQLAENLTYAWHNMDIFGAVNQPGSGWRQLVNRTRGLFCNERHIPAPRKHLLKNVCGVAYPGELLAVMGSSGAGKTTLLNALAFRSPQGIQVSPSGMRLLNGQPVDAKEMQARCAYVQQDDLFIGSLTAREHLIFQAMVRMPRHLTYRQRVARVDQVIQELSLSKCQHTIIGVPGRVKGLSGGERKRLAFASEALTDPPLLICDEPTSGLDSFTAHSVVQVLKKLSQKGKTVILTIHQPSSELFELFDKILLMAEGRVAFLGTPSEAVDFFSYVGAQCPTNYNPADFYVQVLAVVPGREIESRDRIAKICDNFAISKVARDMEQLLATKNLEKPLEQPENGYTYKATWFMQFRAVLWRSWLSVLKEPLLVKVRLIQTTMVAILIGLIFLGQQLTQVGVMNINGAIFLFLTNMTFQNVFATINVFTSELPVFMREARSRLYRCDTYFLGKTIAELPLFLTVPLVFTAIAYPMIGLRAGVLHFFNCLALVTLVANVSTSFGYLISCASSSTSMALSVGPPVIIPFLLFGGFFLNSGSVPVYLKWLSYLSWFRYANEGLLINQWADVEPGEISCTSSNTTCPSSGKVILETLNFSAADLPLDYVGLAILIVSFRVLAYLALRLRARRKE.

Positions 1 to 30 are disordered; sequence MGQEDQELLIRGGSKHPSAEHLNNGDSGAA. The Cytoplasmic portion of the chain corresponds to 1–419; sequence MGQEDQELLI…FMQFRAVLWR (419 aa). Positions 93-341 constitute an ABC transporter domain; that stretch reads NRTRGLFCNE…FSYVGAQCPT (249 aa). ATP is bound at residue 130 to 137; sequence GSSGAGKT. Residues 420-440 traverse the membrane as a helical segment; sequence SWLSVLKEPLLVKVRLIQTTM. Topologically, residues 441–460 are extracellular; the sequence is VAILIGLIFLGQQLTQVGVM. Residues 461 to 481 traverse the membrane as a helical segment; the sequence is NINGAIFLFLTNMTFQNVFAT. Over 482–497 the chain is Cytoplasmic; sequence INVFTSELPVFMREAR. Residues 498–518 traverse the membrane as a helical segment; it reads SRLYRCDTYFLGKTIAELPLF. The Extracellular portion of the chain corresponds to 519–531; sequence LTVPLVFTAIAYP. The helical transmembrane segment at 532 to 552 threads the bilayer; the sequence is MIGLRAGVLHFFNCLALVTLV. Residues 553-568 lie on the Cytoplasmic side of the membrane; that stretch reads ANVSTSFGYLISCASS. A helical transmembrane segment spans residues 569–589; the sequence is STSMALSVGPPVIIPFLLFGG. The Extracellular segment spans residues 590 to 644; the sequence is FFLNSGSVPVYLKWLSYLSWFRYANEGLLINQWADVEPGEISCTSSNTTCPSSGK. An N-linked (GlcNAc...) asparagine glycan is attached at Asn-636. Residues 645–665 form a helical membrane-spanning segment; sequence VILETLNFSAADLPLDYVGLA. Topologically, residues 666 to 675 are cytoplasmic; sequence ILIVSFRVLA.

Belongs to the ABC transporter superfamily. ABCG family. Eye pigment precursor importer (TC 3.A.1.204) subfamily. As to quaternary structure, may form a heterodimer with bw/brown. May form a heterodimer with st/scarlet. In terms of tissue distribution, expressed in the head (at protein level). Expressed in the eye, specifically in retina primary pigment cells, in the basement membrane of the base of secondary and tertiary pigment cells, and in retinula cells (at protein level). Expressed in the retina underlying lamina in the epithelial glia that surrounds the array of lamina cartridges (at protein level). Weakly expressed in photoreceptors, specifically in terminals of R1-R6, R7 and R8 (at protein level). Expressed at very low levels in medulla and central brain (at protein level). Expressed in principal cells of the Malpighian tubules.

The protein resides in the cytoplasmic vesicle membrane. It carries out the reaction 3',5'-cyclic GMP(in) + ATP + H2O = 3',5'-cyclic GMP(out) + ADP + phosphate + H(+). The catalysed reaction is guanine(out) + ATP + H2O = guanine(in) + ADP + phosphate + H(+). The enzyme catalyses riboflavin(in) + ATP + H2O = riboflavin(out) + ADP + phosphate + H(+). It catalyses the reaction (6S)-5,6,7,8-tetrahydrofolate(out) + ATP + H2O = (6S)-5,6,7,8-tetrahydrofolate(in) + ADP + phosphate + H(+). It carries out the reaction L-tryptophan(out) + ATP + H2O = L-tryptophan(in) + ADP + phosphate + H(+). The catalysed reaction is L-kynurenine(out) + ATP + H2O = L-kynurenine(in) + ADP + phosphate + H(+). The enzyme catalyses xanthine(out) + ATP + H2O = xanthine(in) + ADP + phosphate + H(+). Its function is as follows. ATP-dependent transporter of the ATP-binding cassette (ABC) family which transports various molecules including bioamines, neurotransmitters, metabolic intermediates and second messengers. In the eye, required for the transport of the eye red and brown pigment precursors, guanine and tryptophan, into pigment cell granules. Probably in association with bw/brown, involved in the transport of guanine. Probably in association with st/scarlet involved in the transport of kynurenine and probably tryptophan. Involved in the transport of kynurenine in pupal eyes. May play a role in histamine uptake by the lamina epithelial glia which surrounds photoreceptors R1-R6. In Malpighian tubules, involved in the transport of cGMP, guanine, xanthine, riboflavin, kynurenine and tryptophan. Probably in association with br/brown, involved in aging-induced intestinal stem cell proliferation in the midgut by regulating tetrahydrofolate transport. Probably in association with st/scarlet, plays a role in zinc storage granule biogenesis in Malpighian tubule principal epithelial cells. This Drosophila melanogaster (Fruit fly) protein is Protein white.